The following is a 461-amino-acid chain: Ubiquinone hydroxylase UbiM (461 aa).

It belongs to the UbiH/COQ6 family. It depends on FAD as a cofactor.

It carries out the reaction a 2-(all-trans-polyprenyl)phenol + NADPH + O2 + H(+) = a 3-(all-trans-polyprenyl)benzene-1,2-diol + NADP(+) + H2O. It catalyses the reaction a 5-methoxy-2-methyl-3-(all-trans-polyprenyl)benzene-1,4-diol + AH2 + O2 = a 3-demethylubiquinol + A + H2O. It participates in cofactor biosynthesis; ubiquinone biosynthesis. Catalyzes the hydroxylation of three positions of the aromatic ring during ubiquinone biosynthesis. This chain is Ubiquinone hydroxylase UbiM, found in Neisseria meningitidis serogroup C / serotype 2a (strain ATCC 700532 / DSM 15464 / FAM18).